The sequence spans 117 residues: Large ribosomal subunit protein bL20c (117 aa).

It belongs to the bacterial ribosomal protein bL20 family.

Its subcellular location is the plastid. The protein resides in the chloroplast. Its function is as follows. Binds directly to 23S ribosomal RNA and is necessary for the in vitro assembly process of the 50S ribosomal subunit. It is not involved in the protein synthesizing functions of that subunit. The protein is Large ribosomal subunit protein bL20c of Gossypium hirsutum (Upland cotton).